We begin with the raw amino-acid sequence, 359 residues long: RNA 3'-terminal phosphate cyclase (359 aa).

ATP is bound by residues Q100 and 291–294 (HASD). Residue H317 is the Tele-AMP-histidine intermediate of the active site.

Belongs to the RNA 3'-terminal cyclase family. Type 1 subfamily.

It localises to the cytoplasm. The enzyme catalyses a 3'-end 3'-phospho-ribonucleotide-RNA + ATP = a 3'-end 2',3'-cyclophospho-ribonucleotide-RNA + AMP + diphosphate. Catalyzes the conversion of 3'-phosphate to a 2',3'-cyclic phosphodiester at the end of RNA. The mechanism of action of the enzyme occurs in 3 steps: (A) adenylation of the enzyme by ATP; (B) transfer of adenylate to an RNA-N3'P to produce RNA-N3'PP5'A; (C) and attack of the adjacent 2'-hydroxyl on the 3'-phosphorus in the diester linkage to produce the cyclic end product. The biological role of this enzyme is unknown but it is likely to function in some aspects of cellular RNA processing. The protein is RNA 3'-terminal phosphate cyclase of Hyperthermus butylicus (strain DSM 5456 / JCM 9403 / PLM1-5).